A 486-amino-acid polypeptide reads, in one-letter code: Aspartyl/glutamyl-tRNA(Asn/Gln) amidotransferase subunit B (486 aa).

It belongs to the GatB/GatE family. GatB subfamily. As to quaternary structure, heterotrimer of A, B and C subunits.

The catalysed reaction is L-glutamyl-tRNA(Gln) + L-glutamine + ATP + H2O = L-glutaminyl-tRNA(Gln) + L-glutamate + ADP + phosphate + H(+). It carries out the reaction L-aspartyl-tRNA(Asn) + L-glutamine + ATP + H2O = L-asparaginyl-tRNA(Asn) + L-glutamate + ADP + phosphate + 2 H(+). In terms of biological role, allows the formation of correctly charged Asn-tRNA(Asn) or Gln-tRNA(Gln) through the transamidation of misacylated Asp-tRNA(Asn) or Glu-tRNA(Gln) in organisms which lack either or both of asparaginyl-tRNA or glutaminyl-tRNA synthetases. The reaction takes place in the presence of glutamine and ATP through an activated phospho-Asp-tRNA(Asn) or phospho-Glu-tRNA(Gln). This is Aspartyl/glutamyl-tRNA(Asn/Gln) amidotransferase subunit B from Leptospira borgpetersenii serovar Hardjo-bovis (strain JB197).